The following is a 189-amino-acid chain: GTP cyclohydrolase 1 (189 aa).

Cysteine 78, histidine 81, and cysteine 150 together coordinate Zn(2+).

It belongs to the GTP cyclohydrolase I family. As to quaternary structure, toroid-shaped homodecamer, composed of two pentamers of five dimers.

It carries out the reaction GTP + H2O = 7,8-dihydroneopterin 3'-triphosphate + formate + H(+). It participates in cofactor biosynthesis; 7,8-dihydroneopterin triphosphate biosynthesis; 7,8-dihydroneopterin triphosphate from GTP: step 1/1. In Listeria innocua serovar 6a (strain ATCC BAA-680 / CLIP 11262), this protein is GTP cyclohydrolase 1.